The primary structure comprises 1291 residues: DNA-directed RNA polymerase subunit beta' (1291 aa).

Residues Cys-60, Cys-62, Cys-75, and Cys-78 each coordinate Zn(2+). The Mg(2+) site is built by Asp-535, Asp-537, and Asp-539. Residues Cys-874, Cys-951, Cys-958, and Cys-961 each coordinate Zn(2+).

Belongs to the RNA polymerase beta' chain family. The RNAP catalytic core consists of 2 alpha, 1 beta, 1 beta' and 1 omega subunit. When a sigma factor is associated with the core the holoenzyme is formed, which can initiate transcription. Mg(2+) serves as cofactor. Requires Zn(2+) as cofactor.

The enzyme catalyses RNA(n) + a ribonucleoside 5'-triphosphate = RNA(n+1) + diphosphate. Its function is as follows. DNA-dependent RNA polymerase catalyzes the transcription of DNA into RNA using the four ribonucleoside triphosphates as substrates. The protein is DNA-directed RNA polymerase subunit beta' of Leifsonia xyli subsp. xyli (strain CTCB07).